The sequence spans 126 residues: Small ribosomal subunit protein uS11 (126 aa).

This sequence belongs to the universal ribosomal protein uS11 family. Part of the 30S ribosomal subunit. Interacts with proteins S7 and S18. Binds to IF-3.

Located on the platform of the 30S subunit, it bridges several disparate RNA helices of the 16S rRNA. Forms part of the Shine-Dalgarno cleft in the 70S ribosome. This chain is Small ribosomal subunit protein uS11, found in Desulfotalea psychrophila (strain LSv54 / DSM 12343).